Here is a 1653-residue protein sequence, read N- to C-terminus: Protein strawberry notch (1653 aa).

5 disordered regions span residues 1-46 (MTSK…GRDL), 190-211 (GSPA…GGAI), 237-265 (GSNA…PNPG), 317-345 (NNQK…VKGN), and 883-1043 (SVAD…PSGS). The span at 11-36 (DADDDNDNFDEDDSGSDFDDDEDPDQ) shows a compositional bias: acidic residues. Phosphoserine is present on residues S24 and S26. Polar residues predominate over residues 194-205 (ARSSGNAGTTGS). Residues 256–265 (SPTGGIPNPG) are compositionally biased toward low complexity. Gly residues predominate over residues 329–342 (GSGGPAGGAPGSGV). Residues 883–901 (SVADSTSSLSNNSNITTAA) are compositionally biased toward low complexity. S929 and S931 each carry phosphoserine. Residues 966–975 (IDDEDEDHDV) show a composition bias toward acidic residues. Positions 980–998 (RSVASDASSDFNPFFSGSD) are enriched in polar residues. Residues 1008–1027 (RSKKSKKAQKKSKKKVKKEK) show a composition bias toward basic residues. Residues 1064–1125 (LSTQDKIQDL…RKIERLGARL (62 aa)) are a coiled coil.

The protein belongs to the SBNO family. In terms of assembly, interacts with vg for function in the wing disk. Interacts with Su(H) for function in the eye disk. In terms of tissue distribution, at stage 8, when the formation of the midline precursor cells depends on Notch signaling, high level of expression is seen in the midline precursor cells and a lower level in the surrounding epidermal cells. Between stages 11 and 14, expression is uniform throughout the epidermis, and at stage 16, high level of expression is restricted to the central nervous system. Expressed in the larval leg, wing and eye imaginal disks. Expression is over the wing disk and accumulates within the pleural region.

The protein resides in the nucleus. Its function is as follows. Notch pathway component, may contribute to the specificity between lateral and inductive Notch signaling pathways in the wing disk. Required during many developmental stages including oogenesis, embryogenesis and imaginal development of the eye, wing and leg. Ebi and sno regulate EGFR-dependent Delta transcription in the developing eye, by antagonizing a repressor function of Suppressor of Hairless (Su(H)). They are required in the R-cells for normal cone cell development. This Drosophila melanogaster (Fruit fly) protein is Protein strawberry notch.